The sequence spans 103 residues: Translation initiation factor 1A (103 aa).

The S1-like domain occupies 11–86 (TRVRTPRENE…EKCDVIWRYT (76 aa)).

Belongs to the eIF-1A family.

Seems to be required for maximal rate of protein biosynthesis. Enhances ribosome dissociation into subunits and stabilizes the binding of the initiator Met-tRNA(I) to 40 S ribosomal subunits. The sequence is that of Translation initiation factor 1A (eIF1A) from Methanococcus maripaludis (strain C5 / ATCC BAA-1333).